The following is a 119-amino-acid chain: UPF0102 protein Athe_0977 (119 aa).

It belongs to the UPF0102 family.

The sequence is that of UPF0102 protein Athe_0977 from Caldicellulosiruptor bescii (strain ATCC BAA-1888 / DSM 6725 / KCTC 15123 / Z-1320) (Anaerocellum thermophilum).